Reading from the N-terminus, the 325-residue chain is Glutarate 2-hydroxylase (325 aa).

Fe cation-binding residues include His-160, Asp-162, and His-292.

This sequence belongs to the glutarate hydroxylase family. Homotetramer. Requires Fe(2+) as cofactor.

It catalyses the reaction glutarate + 2-oxoglutarate + O2 = (S)-2-hydroxyglutarate + succinate + CO2. It functions in the pathway amino-acid degradation. In terms of biological role, acts as an alpha-ketoglutarate-dependent dioxygenase catalyzing hydroxylation of glutarate (GA) to L-2-hydroxyglutarate (L2HG). Functions in a L-lysine degradation pathway that proceeds via cadaverine, glutarate and L-2-hydroxyglutarate. The chain is Glutarate 2-hydroxylase from Escherichia coli O127:H6 (strain E2348/69 / EPEC).